Reading from the N-terminus, the 258-residue chain is ProSAAS (258 aa).

An N-terminal signal peptide occupies residues 1 to 33 (MAGSPLLCGPRAGGVGILVLLLLGLLRLPPTLS). Residues 34–213 (ARPVKEPRSL…SSEPEAAPAP (180 aa)) are proSAAS(1-180). Disordered stretches follow at residues 156-188 (PAPA…TPDV), 204-230 (SSEP…EVPP), and 239-258 (RVKR…LLPP). The span at 177–188 (DVEDAGDETPDV) shows a compositional bias: acidic residues. Residues 204–213 (SSEPEAAPAP) show a composition bias toward low complexity. The interval 219–258 (SVDQDLGPEVPPENVLGALLRVKRLENPSPQAPARRLLPP) is C-terminal inhibitory domain; interacts with PCSK1. The short motif at 237-242 (LLRVKR) is the Sufficient for inhibition of PCSK1 element.

In terms of assembly, interacts via the C-terminal inhibitory domain with PCSK1 66 kDa form. Post-translationally, proteolytically cleaved in the Golgi. Little SAAS, PEN, PEN-20 and Big LEN are the major processed peptides in proSAAS-overexpressing AtT-20 pituitary corticotropic cell line. In terms of tissue distribution, expressed in brain (mostly hypothalamus and pituitary) and gut. Expressed in trigeminal ganglia and neuroendocrine cell lines. As to expression, expressed in pancreas, spinal cord and brain (most abundant in striatum, hippocampus, pons and medulla, and cortex) (at protein level).

Its subcellular location is the secreted. It localises to the golgi apparatus. The protein localises to the trans-Golgi network. Functionally, may function in the control of the neuroendocrine secretory pathway. Proposed be a specific endogenous inhibitor of PCSK1. ProSAAS and Big PEN-LEN, both containing the C-terminal inhibitory domain, but not the processed peptides reduce PCSK1 activity in the endoplasmic reticulum and Golgi. It reduces the activity of the 87 kDa form but not the autocatalytically derived 66 kDa form of PCSK1. Subsequent processing of proSAAS may eliminate the inhibition. Slows down convertase-mediated processing of proopiomelanocortin and proenkephalin. May control the intracellular timing of PCSK1 rather than its total level of activity. In terms of biological role, endogenous ligand for GPR171. Neuropeptide involved in the regulation of feeding. Its function is as follows. Endogenous ligand for GPR171. Neuropeptide involved in the regulation of feeding. This chain is ProSAAS (Pcsk1n), found in Mus musculus (Mouse).